Here is a 118-residue protein sequence, read N- to C-terminus: Large ribosomal subunit protein uL23c (118 aa).

This sequence belongs to the universal ribosomal protein uL23 family. In terms of assembly, part of the 50S ribosomal subunit.

The protein resides in the plastid. It is found in the chloroplast. Its function is as follows. Binds to 23S rRNA. This is Large ribosomal subunit protein uL23c (rpl23) from Stigeoclonium helveticum (Green alga).